We begin with the raw amino-acid sequence, 351 residues long: Putative [LysW]-L-2-aminoadipate/[LysW]-L-glutamate phosphate reductase (351 aa).

NADP(+)-binding positions include 10–13 (SGFT) and 34–36 (SRK). Residue C151 is part of the active site. N318 is an NADP(+) binding site.

Belongs to the NAGSA dehydrogenase family. Type 1 subfamily. LysY sub-subfamily.

It is found in the cytoplasm. It carries out the reaction [amino-group carrier protein]-C-terminal-N-(1-carboxy-5-oxopentan-1-yl)-L-glutamine + phosphate + NADP(+) = [amino-group carrier protein]-C-terminal-N-(1-carboxy-5-phosphooxy-5-oxopentan-1-yl)-L-glutamine + NADPH + H(+). The catalysed reaction is [amino-group carrier protein]-C-terminal-gamma-(L-glutamyl-5-semialdehyde)-L-glutamate + phosphate + NADP(+) = [amino-group carrier protein]-C-terminal-gamma-(5-phospho-L-glutamyl)-L-glutamate + NADPH + H(+). It participates in amino-acid biosynthesis; L-lysine biosynthesis via AAA pathway; L-lysine from L-alpha-aminoadipate (Thermus route): step 3/5. The protein operates within amino-acid biosynthesis; L-arginine biosynthesis. Its function is as follows. Involved in both the arginine and lysine biosynthetic pathways. This is Putative [LysW]-L-2-aminoadipate/[LysW]-L-glutamate phosphate reductase from Pyrobaculum calidifontis (strain DSM 21063 / JCM 11548 / VA1).